A 449-amino-acid chain; its full sequence is Adenylyltransferase and sulfurtransferase MOCS3 (449 aa).

Residues G96, D117, S124–R128, K141, and D185–N186 each bind ATP. Zn(2+) is bound by residues C227 and C230. Catalysis depends on C244, which acts as the Glycyl thioester intermediate; for adenylyltransferase activity. Zn(2+) contacts are provided by C302 and C305. The Rhodanese domain occupies Q351 to P447. The active-site Cysteine persulfide intermediate; for sulfurtransferase activity is the C406.

In the N-terminal section; belongs to the HesA/MoeB/ThiF family. UBA4 subfamily. The cofactor is Zn(2+).

It is found in the cytoplasm. It localises to the cytosol. The catalysed reaction is [molybdopterin-synthase sulfur-carrier protein]-C-terminal Gly-Gly + ATP + H(+) = [molybdopterin-synthase sulfur-carrier protein]-C-terminal Gly-Gly-AMP + diphosphate. The enzyme catalyses [molybdopterin-synthase sulfur-carrier protein]-C-terminal Gly-Gly-AMP + S-sulfanyl-L-cysteinyl-[cysteine desulfurase] + AH2 = [molybdopterin-synthase sulfur-carrier protein]-C-terminal-Gly-aminoethanethioate + L-cysteinyl-[cysteine desulfurase] + A + AMP + 2 H(+). Its pathway is tRNA modification; 5-methoxycarbonylmethyl-2-thiouridine-tRNA biosynthesis. It functions in the pathway cofactor biosynthesis; molybdopterin biosynthesis. In terms of biological role, plays a central role in 2-thiolation of mcm(5)S(2)U at tRNA wobble positions of cytosolic tRNA(Lys), tRNA(Glu) and tRNA(Gln). Also essential during biosynthesis of the molybdenum cofactor. Acts by mediating the C-terminal thiocarboxylation of sulfur carriers URM1 and MOCS2A. Its N-terminus first activates URM1 and MOCS2A as acyl-adenylates (-COAMP), then the persulfide sulfur on the catalytic cysteine is transferred to URM1 and MOCS2A to form thiocarboxylation (-COSH) of their C-terminus. The reaction probably involves hydrogen sulfide that is generated from the persulfide intermediate and that acts as a nucleophile towards URM1 and MOCS2A. Subsequently, a transient disulfide bond is formed. Does not use thiosulfate as sulfur donor; NFS1 probably acting as a sulfur donor for thiocarboxylation reactions. This is Adenylyltransferase and sulfurtransferase MOCS3 from Drosophila grimshawi (Hawaiian fruit fly).